Here is a 253-residue protein sequence, read N- to C-terminus: Type III pantothenate kinase (253 aa).

An ATP-binding site is contributed by 6–13 (DVGNTNTV). Residue 103–106 (GADR) participates in substrate binding. The active-site Proton acceptor is the D105. D125 contacts K(+). T128 provides a ligand contact to ATP. T180 contacts substrate.

Belongs to the type III pantothenate kinase family. Homodimer. NH4(+) serves as cofactor. The cofactor is K(+).

The protein resides in the cytoplasm. It carries out the reaction (R)-pantothenate + ATP = (R)-4'-phosphopantothenate + ADP + H(+). Its pathway is cofactor biosynthesis; coenzyme A biosynthesis; CoA from (R)-pantothenate: step 1/5. Catalyzes the phosphorylation of pantothenate (Pan), the first step in CoA biosynthesis. This is Type III pantothenate kinase from Parafrankia sp. (strain EAN1pec).